A 172-amino-acid polypeptide reads, in one-letter code: Peptidyl-prolyl cis-trans isomerase (172 aa).

The 164-residue stretch at 7–170 (FFDMAIAGNP…RPVTIADCGQ (164 aa)) folds into the PPIase cyclophilin-type domain.

It belongs to the cyclophilin-type PPIase family. As to expression, expressed in meristematic tissues, with higher levels in nodules.

The protein resides in the cytoplasm. It carries out the reaction [protein]-peptidylproline (omega=180) = [protein]-peptidylproline (omega=0). Its activity is regulated as follows. Binds cyclosporin A (CsA). CsA mediates some of its effects via an inhibitory action on PPIase. In terms of biological role, PPIases accelerate the folding of proteins. It catalyzes the cis-trans isomerization of proline imidic peptide bonds in oligopeptides. The protein is Peptidyl-prolyl cis-trans isomerase of Lupinus luteus (European yellow lupine).